Consider the following 681-residue polypeptide: Structure-specific endonuclease subunit SLX4 (681 aa).

Disordered regions lie at residues 239–305 and 505–528; these read EREK…QEQL and EVTG…NENL. Positions 251–261 are enriched in polar residues; it reads SDSSPEPTQLL. Residues 265–281 are compositionally biased toward acidic residues; the sequence is IIEEEHEVDEEEEDNEN. Polar residues-rich tracts occupy residues 288-305 and 518-528; these read QLAS…QEQL and QVPSSPGNENL.

This sequence belongs to the SLX4 family. Forms a heterodimer with SLX1. Phosphorylated in response to DNA damage.

Its subcellular location is the nucleus. In terms of biological role, regulatory subunit of the SLX1-SLX4 structure-specific endonuclease that resolves DNA secondary structures generated during DNA repair and recombination. Has endonuclease activity towards branched DNA substrates, introducing single-strand cuts in duplex DNA close to junctions with ss-DNA. The protein is Structure-specific endonuclease subunit SLX4 of Meyerozyma guilliermondii (strain ATCC 6260 / CBS 566 / DSM 6381 / JCM 1539 / NBRC 10279 / NRRL Y-324) (Yeast).